The primary structure comprises 81 residues: ATP synthase subunit c, chloroplastic (81 aa).

A run of 2 helical transmembrane segments spans residues 4-24 (VISAASVIAAGLAVGLASIGP) and 57-77 (LAFMEALTIYGLVVALALLFA).

The protein belongs to the ATPase C chain family. As to quaternary structure, F-type ATPases have 2 components, F(1) - the catalytic core - and F(0) - the membrane proton channel. F(1) has five subunits: alpha(3), beta(3), gamma(1), delta(1), epsilon(1). F(0) has four main subunits: a(1), b(1), b'(1) and c(10-14). The alpha and beta chains form an alternating ring which encloses part of the gamma chain. F(1) is attached to F(0) by a central stalk formed by the gamma and epsilon chains, while a peripheral stalk is formed by the delta, b and b' chains.

Its subcellular location is the plastid. The protein localises to the chloroplast thylakoid membrane. In terms of biological role, f(1)F(0) ATP synthase produces ATP from ADP in the presence of a proton or sodium gradient. F-type ATPases consist of two structural domains, F(1) containing the extramembraneous catalytic core and F(0) containing the membrane proton channel, linked together by a central stalk and a peripheral stalk. During catalysis, ATP synthesis in the catalytic domain of F(1) is coupled via a rotary mechanism of the central stalk subunits to proton translocation. Functionally, key component of the F(0) channel; it plays a direct role in translocation across the membrane. A homomeric c-ring of between 10-14 subunits forms the central stalk rotor element with the F(1) delta and epsilon subunits. In Zygnema circumcarinatum (Green alga), this protein is ATP synthase subunit c, chloroplastic.